Here is a 452-residue protein sequence, read N- to C-terminus: Phosphoglucosamine mutase (452 aa).

S103 (phosphoserine intermediate) is an active-site residue. Positions 103, 243, 245, and 247 each coordinate Mg(2+). At S103 the chain carries Phosphoserine.

The protein belongs to the phosphohexose mutase family. Mg(2+) is required as a cofactor. Post-translationally, activated by phosphorylation.

The catalysed reaction is alpha-D-glucosamine 1-phosphate = D-glucosamine 6-phosphate. Catalyzes the conversion of glucosamine-6-phosphate to glucosamine-1-phosphate. The protein is Phosphoglucosamine mutase of Lactobacillus acidophilus (strain ATCC 700396 / NCK56 / N2 / NCFM).